The primary structure comprises 420 residues: Serine--tRNA ligase (420 aa).

Residue 227-229 (TSE) participates in L-serine binding. ATP is bound by residues 258 to 260 (RRE) and valine 274. Glutamate 281 is an L-serine binding site. 345–348 (EVTS) serves as a coordination point for ATP. Threonine 379 is a binding site for L-serine.

This sequence belongs to the class-II aminoacyl-tRNA synthetase family. Type-1 seryl-tRNA synthetase subfamily. As to quaternary structure, homodimer. The tRNA molecule binds across the dimer.

It localises to the cytoplasm. It carries out the reaction tRNA(Ser) + L-serine + ATP = L-seryl-tRNA(Ser) + AMP + diphosphate + H(+). The enzyme catalyses tRNA(Sec) + L-serine + ATP = L-seryl-tRNA(Sec) + AMP + diphosphate + H(+). The protein operates within aminoacyl-tRNA biosynthesis; selenocysteinyl-tRNA(Sec) biosynthesis; L-seryl-tRNA(Sec) from L-serine and tRNA(Sec): step 1/1. In terms of biological role, catalyzes the attachment of serine to tRNA(Ser). Is also able to aminoacylate tRNA(Sec) with serine, to form the misacylated tRNA L-seryl-tRNA(Sec), which will be further converted into selenocysteinyl-tRNA(Sec). The protein is Serine--tRNA ligase of Acidothermus cellulolyticus (strain ATCC 43068 / DSM 8971 / 11B).